Reading from the N-terminus, the 362-residue chain is Phosphoserine aminotransferase (362 aa).

L-glutamate-binding residues include Ser9 and Arg42. Pyridoxal 5'-phosphate contacts are provided by residues 76–77 (GR), Trp102, Thr153, Asp174, and Gln197. Residue Lys198 is modified to N6-(pyridoxal phosphate)lysine. 239–240 (NT) serves as a coordination point for pyridoxal 5'-phosphate.

Belongs to the class-V pyridoxal-phosphate-dependent aminotransferase family. SerC subfamily. As to quaternary structure, homodimer. It depends on pyridoxal 5'-phosphate as a cofactor.

It is found in the cytoplasm. It catalyses the reaction O-phospho-L-serine + 2-oxoglutarate = 3-phosphooxypyruvate + L-glutamate. It carries out the reaction 4-(phosphooxy)-L-threonine + 2-oxoglutarate = (R)-3-hydroxy-2-oxo-4-phosphooxybutanoate + L-glutamate. The protein operates within amino-acid biosynthesis; L-serine biosynthesis; L-serine from 3-phospho-D-glycerate: step 2/3. Its pathway is cofactor biosynthesis; pyridoxine 5'-phosphate biosynthesis; pyridoxine 5'-phosphate from D-erythrose 4-phosphate: step 3/5. Functionally, catalyzes the reversible conversion of 3-phosphohydroxypyruvate to phosphoserine and of 3-hydroxy-2-oxo-4-phosphonooxybutanoate to phosphohydroxythreonine. The polypeptide is Phosphoserine aminotransferase (Salmonella agona (strain SL483)).